The following is a 146-amino-acid chain: Phospholipase A2 (146 aa).

An N-terminal signal peptide occupies residues 1–18 (MAFLVFAFLTLMAVETYG). 7 disulfide bridges follow: cysteine 44-cysteine 137, cysteine 46-cysteine 62, cysteine 61-cysteine 117, cysteine 67-cysteine 144, cysteine 68-cysteine 110, cysteine 77-cysteine 103, and cysteine 95-cysteine 108. 3 residues coordinate Ca(2+): tyrosine 45, glycine 47, and glycine 49. Histidine 65 is an active-site residue. Aspartate 66 contacts Ca(2+). A glycan (N-linked (GlcNAc...) asparagine) is linked at asparagine 85. Aspartate 111 is a catalytic residue. N-linked (GlcNAc...) asparagine glycosylation occurs at asparagine 126.

Ca(2+) serves as cofactor. N-glycosylated. Glycosylated with mannose chains including Man2(GlcNAc), Man2(GlcNAc)2, Man2(GlcNAc)3, Man2(GlcNAc)4 and Man2(GlcNAc)5. As to expression, expressed by the skin glands (at protein level).

The protein resides in the secreted. The enzyme catalyses a 1,2-diacyl-sn-glycero-3-phosphocholine + H2O = a 1-acyl-sn-glycero-3-phosphocholine + a fatty acid + H(+). In terms of biological role, PLA2 catalyzes the calcium-dependent hydrolysis of the 2-acyl groups in 3-sn-phosphoglycerides. This chain is Phospholipase A2, found in Pithecopus azureus (Orange-legged monkey tree frog).